Here is a 172-residue protein sequence, read N- to C-terminus: MKETIRIIGIDPGLRRTGWGIVESLGNSLHFIGSGTVTSNAEMDLASRLCQLHEGLSKVLHEYMPHEAAVEHTFVNKDATATLKLGQARGIALLAPAQAGLPVAEYAPNAVKKAVIGVGHGEKQQIHMMVKVLMPRASFDTSDAADALAIAICHAHHRQSIASARRLQQLIA.

Active-site residues include Asp11, Glu71, and Asp143. Asp11, Glu71, and Asp143 together coordinate Mg(2+).

It belongs to the RuvC family. In terms of assembly, homodimer which binds Holliday junction (HJ) DNA. The HJ becomes 2-fold symmetrical on binding to RuvC with unstacked arms; it has a different conformation from HJ DNA in complex with RuvA. In the full resolvosome a probable DNA-RuvA(4)-RuvB(12)-RuvC(2) complex forms which resolves the HJ. The cofactor is Mg(2+).

It is found in the cytoplasm. It carries out the reaction Endonucleolytic cleavage at a junction such as a reciprocal single-stranded crossover between two homologous DNA duplexes (Holliday junction).. Its function is as follows. The RuvA-RuvB-RuvC complex processes Holliday junction (HJ) DNA during genetic recombination and DNA repair. Endonuclease that resolves HJ intermediates. Cleaves cruciform DNA by making single-stranded nicks across the HJ at symmetrical positions within the homologous arms, yielding a 5'-phosphate and a 3'-hydroxyl group; requires a central core of homology in the junction. The consensus cleavage sequence is 5'-(A/T)TT(C/G)-3'. Cleavage occurs on the 3'-side of the TT dinucleotide at the point of strand exchange. HJ branch migration catalyzed by RuvA-RuvB allows RuvC to scan DNA until it finds its consensus sequence, where it cleaves and resolves the cruciform DNA. The polypeptide is Crossover junction endodeoxyribonuclease RuvC (Brucella anthropi (strain ATCC 49188 / DSM 6882 / CCUG 24695 / JCM 21032 / LMG 3331 / NBRC 15819 / NCTC 12168 / Alc 37) (Ochrobactrum anthropi)).